The primary structure comprises 127 residues: Aspartate 1-decarboxylase (127 aa).

Ser25 serves as the catalytic Schiff-base intermediate with substrate; via pyruvic acid. The residue at position 25 (Ser25) is a Pyruvic acid (Ser). Residue Thr57 participates in substrate binding. Tyr58 (proton donor) is an active-site residue. 73–75 (GAA) provides a ligand contact to substrate.

Belongs to the PanD family. Heterooctamer of four alpha and four beta subunits. Pyruvate serves as cofactor. Is synthesized initially as an inactive proenzyme, which is activated by self-cleavage at a specific serine bond to produce a beta-subunit with a hydroxyl group at its C-terminus and an alpha-subunit with a pyruvoyl group at its N-terminus.

The protein localises to the cytoplasm. It catalyses the reaction L-aspartate + H(+) = beta-alanine + CO2. It participates in cofactor biosynthesis; (R)-pantothenate biosynthesis; beta-alanine from L-aspartate: step 1/1. Catalyzes the pyruvoyl-dependent decarboxylation of aspartate to produce beta-alanine. This chain is Aspartate 1-decarboxylase, found in Listeria monocytogenes serovar 1/2a (strain ATCC BAA-679 / EGD-e).